The chain runs to 165 residues: Transcription antitermination protein NusB (165 aa).

The protein belongs to the NusB family.

In terms of biological role, involved in transcription antitermination. Required for transcription of ribosomal RNA (rRNA) genes. Binds specifically to the boxA antiterminator sequence of the ribosomal RNA (rrn) operons. This is Transcription antitermination protein NusB from Chlorobium phaeobacteroides (strain DSM 266 / SMG 266 / 2430).